The primary structure comprises 389 residues: MIGNARMSQKYPTSSSRKRSPLSSGKYSAIGLLAYCRPGFEAECAQELQNIASLQFVYGYSKIDKGTGVVFWRCSQGNPLDVYKEIEVSRCIFARQVFCALHDIEIEDTTDRVSPVVEALRPGGAFGFLHIETPLEDEAGSLQKLAKKLTAPMSAALRNAGVLSKAKTDELPQLHLVCLSGQHIIAALAVHPNSSALPLGIPRLRFRNEAPSRSALKIEEAFLTMLTPAEREFVLKRGQRGVDLGAAPGGWTWYMVTQGVKMTAVDHGALQQELLEDPAVTYVSDDGYVYKPQRKVDWVVCDIVDKPKRTMERMADWLCYDWTTYALFNLKLPMKTRMDEVEACLQRLQERLLGADIESEVRVKQLYHDREEVTVLALTGHFLTAFQKH.

The span at 1-13 shows a compositional bias: polar residues; that stretch reads MIGNARMSQKYPT. The disordered stretch occupies residues 1 to 24; sequence MIGNARMSQKYPTSSSRKRSPLSS. S-adenosyl-L-methionine-binding positions include S214, 247–250, D266, D286, and D302; that span reads APGG. Residue K331 is the Proton acceptor of the active site.

This sequence belongs to the class I-like SAM-binding methyltransferase superfamily. RNA methyltransferase RlmE family. RlmM subfamily. As to quaternary structure, monomer.

It is found in the cytoplasm. It catalyses the reaction cytidine(2498) in 23S rRNA + S-adenosyl-L-methionine = 2'-O-methylcytidine(2498) in 23S rRNA + S-adenosyl-L-homocysteine + H(+). Catalyzes the 2'-O-methylation at nucleotide C2498 in 23S rRNA. This chain is Ribosomal RNA large subunit methyltransferase M, found in Hahella chejuensis (strain KCTC 2396).